The primary structure comprises 135 residues: Early E3 15.3 kDa protein (135 aa).

It belongs to the adenoviridae E3_15 family.

Its function is as follows. Protects virus-infected cells from TNF-induced cytolysis. This chain is Early E3 15.3 kDa protein, found in Human adenovirus B serotype 7 (HAdV-7).